The sequence spans 105 residues: Nucleoid-associated protein Dred_0043 (105 aa).

The protein belongs to the YbaB/EbfC family. In terms of assembly, homodimer.

The protein localises to the cytoplasm. It localises to the nucleoid. Its function is as follows. Binds to DNA and alters its conformation. May be involved in regulation of gene expression, nucleoid organization and DNA protection. The polypeptide is Nucleoid-associated protein Dred_0043 (Desulforamulus reducens (strain ATCC BAA-1160 / DSM 100696 / MI-1) (Desulfotomaculum reducens)).